We begin with the raw amino-acid sequence, 261 residues long: Acetylglutamate kinase (261 aa).

Substrate contacts are provided by residues 41-42, Arg-63, and Asn-157; that span reads GG.

The protein belongs to the acetylglutamate kinase family. ArgB subfamily.

It localises to the cytoplasm. The catalysed reaction is N-acetyl-L-glutamate + ATP = N-acetyl-L-glutamyl 5-phosphate + ADP. It functions in the pathway amino-acid biosynthesis; L-arginine biosynthesis; N(2)-acetyl-L-ornithine from L-glutamate: step 2/4. In terms of biological role, catalyzes the ATP-dependent phosphorylation of N-acetyl-L-glutamate. This chain is Acetylglutamate kinase, found in Koribacter versatilis (strain Ellin345).